The chain runs to 245 residues: MRSGVIAQKLGMTRVFNDGGEHVPVTVLKLDGCQVVAHRTKERNGYTALQLGIGRAKVKNVSKAERGRFAIAEVEPKLKLAEFRVEESDLLPVGAEITADHFVVGQFVDVTGTSIGKGFAGPMKRWNFGGLRATHGVSLSHRSHGSTGGRQDPGKTFKNKKMAGHMGAERVTTLNLKVVQLDIERGLILVEGAVPGVAGGWIQVRDAIKRALPKDAPQPGKYRLANSAAPQPAEADAASDTGAQA.

An N5-methylglutamine modification is found at glutamine 151. The tract at residues 214–245 is disordered; it reads KDAPQPGKYRLANSAAPQPAEADAASDTGAQA. Residues 225–245 show a composition bias toward low complexity; that stretch reads ANSAAPQPAEADAASDTGAQA.

This sequence belongs to the universal ribosomal protein uL3 family. As to quaternary structure, part of the 50S ribosomal subunit. Forms a cluster with proteins L14 and L19. In terms of processing, methylated by PrmB.

Its function is as follows. One of the primary rRNA binding proteins, it binds directly near the 3'-end of the 23S rRNA, where it nucleates assembly of the 50S subunit. This is Large ribosomal subunit protein uL3 from Methylocella silvestris (strain DSM 15510 / CIP 108128 / LMG 27833 / NCIMB 13906 / BL2).